Consider the following 512-residue polypeptide: Probable malate:quinone oxidoreductase (512 aa).

The protein belongs to the MQO family. FAD is required as a cofactor.

It carries out the reaction (S)-malate + a quinone = a quinol + oxaloacetate. It participates in carbohydrate metabolism; tricarboxylic acid cycle; oxaloacetate from (S)-malate (quinone route): step 1/1. The chain is Probable malate:quinone oxidoreductase from Bradyrhizobium diazoefficiens (strain JCM 10833 / BCRC 13528 / IAM 13628 / NBRC 14792 / USDA 110).